We begin with the raw amino-acid sequence, 364 residues long: Aminomethyltransferase (364 aa).

Belongs to the GcvT family. In terms of assembly, the glycine cleavage system is composed of four proteins: P, T, L and H.

It catalyses the reaction N(6)-[(R)-S(8)-aminomethyldihydrolipoyl]-L-lysyl-[protein] + (6S)-5,6,7,8-tetrahydrofolate = N(6)-[(R)-dihydrolipoyl]-L-lysyl-[protein] + (6R)-5,10-methylene-5,6,7,8-tetrahydrofolate + NH4(+). The glycine cleavage system catalyzes the degradation of glycine. This chain is Aminomethyltransferase, found in Salmonella paratyphi A (strain AKU_12601).